A 141-amino-acid chain; its full sequence is Small ribosomal subunit protein uS8 (141 aa).

Belongs to the universal ribosomal protein uS8 family. As to quaternary structure, part of the 30S ribosomal subunit. Contacts proteins S5 and S12.

One of the primary rRNA binding proteins, it binds directly to 16S rRNA central domain where it helps coordinate assembly of the platform of the 30S subunit. This chain is Small ribosomal subunit protein uS8, found in Mycoplasma genitalium (strain ATCC 33530 / DSM 19775 / NCTC 10195 / G37) (Mycoplasmoides genitalium).